We begin with the raw amino-acid sequence, 372 residues long: 4-hydroxybenzoate polyprenyltransferase, mitochondrial (372 aa).

A mitochondrion-targeting transit peptide spans 1-42; that stretch reads MFIWQRKSILLGRSILGSGRVTVAGIIGSSRKRYTSSSSSSS. Helical transmembrane passes span 92–112, 114–134, 171–191, 193–213, 229–249, 298–318, and 352–372; these read PVGT…GAMM, GATL…ALVM, ALVF…LLPA, CWWL…FKRF, ALLG…PLYL, IALL…GFIG, and TGLY…FGFL.

The protein belongs to the UbiA prenyltransferase family. It depends on Mg(2+) as a cofactor.

The protein resides in the mitochondrion inner membrane. The catalysed reaction is an all-trans-polyprenyl diphosphate + 4-hydroxybenzoate = a 4-hydroxy-3-(all-trans-polyprenyl)benzoate + diphosphate. It functions in the pathway cofactor biosynthesis; ubiquinone biosynthesis. Catalyzes the prenylation of para-hydroxybenzoate (PHB) with an all-trans polyprenyl group. Mediates the second step in the final reaction sequence of coenzyme Q (CoQ) biosynthesis, which is the condensation of the polyisoprenoid side chain with PHB, generating the first membrane-bound Q intermediate. This is 4-hydroxybenzoate polyprenyltransferase, mitochondrial from Saccharomyces cerevisiae (strain ATCC 204508 / S288c) (Baker's yeast).